An 812-amino-acid chain; its full sequence is Eukaryotic translation initiation factor 3 subunit C (812 aa).

The interval 1-110 (MSRFFSSNYE…EESDEEDGKK (110 aa)) is disordered. 2 stretches are compositionally biased toward acidic residues: residues 18–30 (SEEDLLSSSEEDL) and 38–64 (SELDQESDDSFFNESESESEADVDSDD). Phosphoserine occurs at positions 98, 99, and 103. The region spanning 608–783 (YHQHINLDLI…TIFVVEKGDE (176 aa)) is the PCI domain.

This sequence belongs to the eIF-3 subunit C family. The eukaryotic translation initiation factor 3 (eIF-3) core complex is composed of TIF32, PRT1, NIP1, TIF34 and TIF35. A subcomplex of TIF32, NIP1 and PRT1 mediates the interaction with eIF-1, TIF5/eIF-5 and HCR1. The factors eIF-1, eIF-2, eIF-3, TIF5/eIF-5 and methionyl-tRNAi form a multifactor complex (MFC) that may bind to the 40S ribosome. TIF32, NIP1 and TIF5/eIF-5 comprise a minimal 40S-ribosome-binding unit. NIP1 interacts with TIF5/eIF-5 and SUI1.

It is found in the cytoplasm. Functionally, component of the eukaryotic translation initiation factor 3 (eIF-3) complex, which is involved in protein synthesis of a specialized repertoire of mRNAs and, together with other initiation factors, stimulates binding of mRNA and methionyl-tRNAi to the 40S ribosome. The eIF-3 complex specifically targets and initiates translation of a subset of mRNAs involved in cell proliferation. The protein is Eukaryotic translation initiation factor 3 subunit C of Saccharomyces cerevisiae (strain ATCC 204508 / S288c) (Baker's yeast).